The chain runs to 425 residues: UDP-N-acetylglucosamine 1-carboxyvinyltransferase (425 aa).

Phosphoenolpyruvate is bound at residue lysine 22 to asparagine 23. A UDP-N-acetyl-alpha-D-glucosamine-binding site is contributed by arginine 93. Residue cysteine 117 is the Proton donor of the active site. Cysteine 117 bears the 2-(S-cysteinyl)pyruvic acid O-phosphothioketal mark. UDP-N-acetyl-alpha-D-glucosamine contacts are provided by residues arginine 122–leucine 126, aspartate 307, and valine 329.

This sequence belongs to the EPSP synthase family. MurA subfamily.

The protein resides in the cytoplasm. The enzyme catalyses phosphoenolpyruvate + UDP-N-acetyl-alpha-D-glucosamine = UDP-N-acetyl-3-O-(1-carboxyvinyl)-alpha-D-glucosamine + phosphate. The protein operates within cell wall biogenesis; peptidoglycan biosynthesis. In terms of biological role, cell wall formation. Adds enolpyruvyl to UDP-N-acetylglucosamine. This Prosthecochloris aestuarii (strain DSM 271 / SK 413) protein is UDP-N-acetylglucosamine 1-carboxyvinyltransferase.